The sequence spans 319 residues: Nucleotide-binding protein Mvan_2698 (319 aa).

A compositionally biased stretch (basic and acidic residues) spans 1-12 (MTEQGMHQELRE). Residues 1–26 (MTEQGMHQELREGAGTAGDEGGLEAA) are disordered. 43 to 50 (GLSGAGRG) serves as a coordination point for ATP. Position 94–97 (94–97 (DVRS)) interacts with GTP.

Belongs to the RapZ-like family.

Its function is as follows. Displays ATPase and GTPase activities. This Mycolicibacterium vanbaalenii (strain DSM 7251 / JCM 13017 / BCRC 16820 / KCTC 9966 / NRRL B-24157 / PYR-1) (Mycobacterium vanbaalenii) protein is Nucleotide-binding protein Mvan_2698.